Consider the following 302-residue polypeptide: uncharacterized protein (302 aa).

10 consecutive transmembrane segments (helical) span residues 13 to 32 (GILLAISAYTMWGIAPIYFK), 42 to 64 (ILSHRVVWSFVLLAVLIHLGRRW), 77 to 96 (FWLLLVTALLVGGNWLIFIW), 106 to 125 (ASLGYYINPLLNVLLGMLFL), 132 to 150 (LQWFAVALAAIGVGIQLVV), 154 to 171 (VPIVAIALATSFGFYGLL), 183 to 202 (LFLETLFMLPAAAIYLIWLA), 217 to 239 (NLLLVCAGVVTTLPLLCFTGAAA), 246 to 265 (LGFFQYIGPSLMFLLAVLVY), and 275 to 297 (ITFAFIWSALVIFSVDGLKAGHA). The EamA domain maps to 22–149 (TMWGIAPIYF…AAIGVGIQLV (128 aa)).

The protein belongs to the EamA transporter family.

It is found in the cell membrane. This is an uncharacterized protein from Vibrio cholerae serotype O1 (strain ATCC 39315 / El Tor Inaba N16961).